A 672-amino-acid chain; its full sequence is Acetyl-coenzyme A synthetase (672 aa).

Residues 205-208 (RGGK) and Thr-325 each bind CoA. Residues 401–403 (GEP), 425–430 (DTYWQT), Asp-516, and Arg-531 each bind ATP. Residue Ser-539 participates in CoA binding. Arg-542 serves as a coordination point for ATP. Arg-600 contacts CoA.

Belongs to the ATP-dependent AMP-binding enzyme family.

The enzyme catalyses acetate + ATP + CoA = acetyl-CoA + AMP + diphosphate. The chain is Acetyl-coenzyme A synthetase (facA) from Phycomyces blakesleeanus (strain ATCC 8743b / DSM 1359 / FGSC 10004 / NBRC 33097 / NRRL 1555).